A 229-amino-acid chain; its full sequence is MAALGHLAGEAAAAPGPGTPCASRGARLPGPVSSARNPSTVCLCPEQPTCSNADSRAHPLGDEGGTASKKQKNKKKTRNRASVANGGEKASEKLAPEEVPLSAEAQAQQLAQELAWCVEQLELGLKRQKPTPKQKEQAIGAIRTLRSKRTPLPRKRQLMHSLFGDYRAQMEAEWREALRALRAAAYSAQVQPVDGATRKKSQRVCRPRSIWRAKATLDMPDEEFRFNFF.

Residues 1-16 (MAALGHLAGEAAAAPG) show a composition bias toward low complexity. Residues 1–96 (MAALGHLAGE…GEKASEKLAP (96 aa)) form a disordered region. Alanine 2 is subject to N-acetylalanine. Arginine 27 carries the post-translational modification Omega-N-methylarginine. Over residues 69-79 (KKQKNKKKTRN) the composition is skewed to basic residues. Serine 82 carries the phosphoserine modification.

Belongs to the UPF0488 family.

The sequence is that of UPF0488 protein C8orf33 (C8orf33) from Homo sapiens (Human).